Here is a 273-residue protein sequence, read N- to C-terminus: Large ribosomal subunit protein uL2 (273 aa).

2 disordered regions span residues Leu-34–Ile-54 and Val-223–Lys-273.

This sequence belongs to the universal ribosomal protein uL2 family. As to quaternary structure, part of the 50S ribosomal subunit. Forms a bridge to the 30S subunit in the 70S ribosome.

Functionally, one of the primary rRNA binding proteins. Required for association of the 30S and 50S subunits to form the 70S ribosome, for tRNA binding and peptide bond formation. It has been suggested to have peptidyltransferase activity; this is somewhat controversial. Makes several contacts with the 16S rRNA in the 70S ribosome. This chain is Large ribosomal subunit protein uL2, found in Azotobacter vinelandii (strain DJ / ATCC BAA-1303).